Here is a 155-residue protein sequence, read N- to C-terminus: Protein-export protein SecB (155 aa).

This sequence belongs to the SecB family. As to quaternary structure, homotetramer, a dimer of dimers. One homotetramer interacts with 1 SecA dimer.

Its subcellular location is the cytoplasm. Functionally, one of the proteins required for the normal export of preproteins out of the cell cytoplasm. It is a molecular chaperone that binds to a subset of precursor proteins, maintaining them in a translocation-competent state. It also specifically binds to its receptor SecA. The polypeptide is Protein-export protein SecB (Shigella sonnei (strain Ss046)).